The chain runs to 138 residues: Putative esterase HI_1161 (138 aa).

This sequence belongs to the thioesterase PaaI family.

This is Putative esterase HI_1161 from Haemophilus influenzae (strain ATCC 51907 / DSM 11121 / KW20 / Rd).